Reading from the N-terminus, the 443-residue chain is MSTSHASAASARETTEGTVYTVTGGDWDEVVQSAAKSDDERIVVNMGPQHPSTHGVLRLILEIDGETVTEARCGIGYLHTGIEKNLEYRTWTQGTTFVTRMDYLTPFFNETAYCLAVEKLLGIENEIPDRASIIRVLLMELNRMSSHLVCIATGGMELGATTIMIYGFRDRELILDIYELITGLRMNHAYIRPGGLAQDLPPGAVDQIREFVKKMKKNLPEYDKLATGNPIFKARMQDVGYLDLAGCMALGATGPILRSAGLPHDLRKSQPYCGYETYDFDVPTADTCDSYGRFLIRLEEMRQSLRIVEQCLDRLAPGPVMVADKKIAWPAQLALGPDGLGNSLDHIKKIMGTSMEALIHHFKLVTEGFRVPPGQTYSAVESPKGELGVHAVSDGGTRPYRVHFRDPSFTNLQAMAAMCEGGQVADVIVAVASIDPVMGGVDR.

It belongs to the complex I 49 kDa subunit family. In terms of assembly, NDH-1 is composed of 14 different subunits. Subunits NuoB, C, D, E, F, and G constitute the peripheral sector of the complex.

It localises to the cell membrane. It catalyses the reaction a quinone + NADH + 5 H(+)(in) = a quinol + NAD(+) + 4 H(+)(out). In terms of biological role, NDH-1 shuttles electrons from NADH, via FMN and iron-sulfur (Fe-S) centers, to quinones in the respiratory chain. The immediate electron acceptor for the enzyme in this species is believed to be a menaquinone. Couples the redox reaction to proton translocation (for every two electrons transferred, four hydrogen ions are translocated across the cytoplasmic membrane), and thus conserves the redox energy in a proton gradient. This chain is NADH-quinone oxidoreductase subunit D 1, found in Streptomyces avermitilis (strain ATCC 31267 / DSM 46492 / JCM 5070 / NBRC 14893 / NCIMB 12804 / NRRL 8165 / MA-4680).